We begin with the raw amino-acid sequence, 444 residues long: Ribulose bisphosphate carboxylase large chain (444 aa).

N6,N6,N6-trimethyllysine is present on Lys7. Positions 116 and 166 each coordinate substrate. The active-site Proton acceptor is Lys168. Residue Lys170 coordinates substrate. Residues Lys194, Asp196, and Glu197 each contribute to the Mg(2+) site. Lys194 carries the N6-carboxylysine modification. The Proton acceptor role is filled by His287. Residues Arg288, His320, and Ser372 each coordinate substrate.

This sequence belongs to the RuBisCO large chain family. Type I subfamily. Heterohexadecamer of 8 large chains and 8 small chains; disulfide-linked. The disulfide link is formed within the large subunit homodimers. Mg(2+) serves as cofactor. Post-translationally, the disulfide bond which can form in the large chain dimeric partners within the hexadecamer appears to be associated with oxidative stress and protein turnover.

The protein resides in the plastid. It localises to the chloroplast. The catalysed reaction is 2 (2R)-3-phosphoglycerate + 2 H(+) = D-ribulose 1,5-bisphosphate + CO2 + H2O. The enzyme catalyses D-ribulose 1,5-bisphosphate + O2 = 2-phosphoglycolate + (2R)-3-phosphoglycerate + 2 H(+). Functionally, ruBisCO catalyzes two reactions: the carboxylation of D-ribulose 1,5-bisphosphate, the primary event in carbon dioxide fixation, as well as the oxidative fragmentation of the pentose substrate in the photorespiration process. Both reactions occur simultaneously and in competition at the same active site. The protein is Ribulose bisphosphate carboxylase large chain of Watsonia angusta.